A 466-amino-acid chain; its full sequence is Adenosylhomocysteinase (466 aa).

The substrate site is built by Thr57, Asp132, and Glu192. NAD(+) is bound at residue 193–195 (TTT). Lys222 and Asp226 together coordinate substrate. NAD(+) contacts are provided by residues Asn227, 256–261 (GYGDVG), Glu279, Asn314, 335–337 (IGH), and Asn380.

The protein belongs to the adenosylhomocysteinase family. NAD(+) serves as cofactor.

It localises to the cytoplasm. It carries out the reaction S-adenosyl-L-homocysteine + H2O = L-homocysteine + adenosine. The protein operates within amino-acid biosynthesis; L-homocysteine biosynthesis; L-homocysteine from S-adenosyl-L-homocysteine: step 1/1. Functionally, may play a key role in the regulation of the intracellular concentration of adenosylhomocysteine. This is Adenosylhomocysteinase from Mesorhizobium japonicum (strain LMG 29417 / CECT 9101 / MAFF 303099) (Mesorhizobium loti (strain MAFF 303099)).